We begin with the raw amino-acid sequence, 139 residues long: MSTVSQLIKKRRSSKTSKTKAPALSYGFNVLQKKAKHYSSPQKMGVCLRVTTMTPKKPNSALRKFARVRLSNGSEVTAYIPGVGHSLQEHSSVLVRGGRVKDLPGVRYHIVRGALDATGVANRKQGRSKYGSKLPKEKK.

Positions 1–21 (MSTVSQLIKKRRSSKTSKTKA) are disordered. The segment covering 8–18 (IKKRRSSKTSK) has biased composition (basic residues).

The protein belongs to the universal ribosomal protein uS12 family. Part of the 30S ribosomal subunit. Contacts proteins S8 and S17. May interact with IF1 in the 30S initiation complex.

Functionally, with S4 and S5 plays an important role in translational accuracy. Its function is as follows. Interacts with and stabilizes bases of the 16S rRNA that are involved in tRNA selection in the A site and with the mRNA backbone. Located at the interface of the 30S and 50S subunits, it traverses the body of the 30S subunit contacting proteins on the other side and probably holding the rRNA structure together. The combined cluster of proteins S8, S12 and S17 appears to hold together the shoulder and platform of the 30S subunit. The chain is Small ribosomal subunit protein uS12 from Onion yellows phytoplasma (strain OY-M).